A 1980-amino-acid chain; its full sequence is Sodium channel protein type 8 subunit alpha (1980 aa).

Disordered regions lie at residues 1 to 20 (MAAR…FTPE) and 28 to 62 (RIAE…LEAG). The Cytoplasmic portion of the chain corresponds to 1-132 (MAARLLAPPG…RIAIKILIHS (132 aa)). Positions 28–61 (RIAESKLKKPPKADGSHREDDEDSKPKPNSDLEA) are enriched in basic and acidic residues. An I repeat occupies 114-442 (ILSPFNLIRR…KAMLEQLKKQ (329 aa)). Residues 133–151 (VFSMIIMCTILTNCVFMTF) form a helical membrane-spanning segment. The Extracellular portion of the chain corresponds to 152 to 158 (SNPPDWS). Residues 159-179 (KNVEYTFTGIYTFESLVKIIA) form a helical membrane-spanning segment. The Cytoplasmic segment spans residues 180 to 193 (RGFCIDGFTFLRDP). A helical transmembrane segment spans residues 194–211 (WNWLDFSVIMMAYITEFV). Over 212–217 (NLGNVS) the chain is Extracellular. N-linked (GlcNAc...) asparagine glycosylation occurs at Asn-215. Residues 218–234 (ALRTFRVLRALKTISVI) traverse the membrane as a helical segment. The Cytoplasmic portion of the chain corresponds to 235–253 (PGLKTIVGALIQSVKKLSD). The helical transmembrane segment at 254–273 (VMILTVFCLSVFALIGLQLF) threads the bilayer. At 274–355 (MGNLRNKCVV…PNYGYTSFDT (82 aa)) the chain is on the extracellular side. Cys-281 and Cys-333 form a disulfide bridge. N-linked (GlcNAc...) asparagine glycans are attached at residues Asn-289, Asn-295, and Asn-308. Residue Asn-326 is glycosylated (N-linked (GlcNAc...) (high mannose) asparagine). Positions 356–380 (FSWAFLALFRLMTQDYWENLYQLTL) form an intramembrane region, pore-forming. Glu-373 contacts Na(+). At 381–387 (RAAGKTY) the chain is on the extracellular side. The helical transmembrane segment at 388–408 (MIFFVLVIFVGSFYLVNLILA) threads the bilayer. The Cytoplasmic segment spans residues 409 to 753 (VVAMAYEEQN…EIVNLIVMDP (345 aa)). Disordered regions lie at residues 446-530 (AQAA…KAFR) and 568-602 (FRGP…DSLF). The segment covering 474–486 (PRSSSEISKLSSK) has biased composition (low complexity). The segment covering 489-500 (KERRNRRKKRKQ) has biased composition (basic residues). Basic and acidic residues-rich tracts occupy residues 501–530 (KELS…KAFR) and 586–602 (DEHS…DSLF). Ser-518 and Ser-520 each carry phosphoserine. One copy of the II repeat lies at 735–1007 (CHPYWIKLKE…QISVIRIKKG (273 aa)). Residues 754–772 (FVDLAITICIVLNTLFMAM) form a helical membrane-spanning segment. Topologically, residues 773 to 783 (EHHPMTPQFEH) are extracellular. A helical membrane pass occupies residues 784–803 (VLAVGNLVFTGIFTAEMFLK). Over 804–817 (LIAMDPYYYFQEGW) the chain is Cytoplasmic. A helical membrane pass occupies residues 818–837 (NIFDGFIVSLSLMELSLADV). Residues 838-839 (EG) lie on the Extracellular side of the membrane. Residues 840–857 (LSVLRSFRLLRVFKLAKS) form a helical membrane-spanning segment. Residues 858-873 (WPTLNMLIKIIGNSVG) are Cytoplasmic-facing. A helical membrane pass occupies residues 874–892 (ALGNLTLVLAIIVFIFAVV). Over 893 to 921 (GMQLFGKSYKECVCKINQDCELPRWHMHD) the chain is Extracellular. Cys-906 and Cys-912 are disulfide-bonded. Positions 922–942 (FFHSFLIVFRVLCGEWIETMW) form an intramembrane region, pore-forming. Positions 936 and 939 each coordinate Na(+). At 943 to 955 (DCMEVAGQAMCLI) the chain is on the extracellular side. An intrachain disulfide couples Cys-944 to Cys-953. Residues 956-976 (VFMMVMVIGNLVVLNLFLALL) form a helical membrane-spanning segment. Over 977–1199 (LSSFSADNLA…TCFLIVEHNW (223 aa)) the chain is Cytoplasmic. Residues 1107 to 1148 (NLNTEDVSSESDPEGSKDKLDDTSSSEGSTIDIKPEVEEVPV) are disordered. Residues 1180-1495 (LGKSWWILRK…KKYYNAMKKL (316 aa)) form an III repeat. A helical membrane pass occupies residues 1200–1217 (FETFIIFMILLSSGALAF). The Extracellular segment spans residues 1218-1230 (EDIYIEQRKTIRT). The chain crosses the membrane as a helical span at residues 1231–1249 (ILEYADKVFTYIFILEMLL). Over 1250–1263 (KWTAYGFVKFFTNA) the chain is Cytoplasmic. A helical transmembrane segment spans residues 1264–1282 (WCWLDFLIVAVSLVSLIAN). Over 1283 to 1290 (ALGYSELG) the chain is Extracellular. Residues 1291-1309 (AIKSLRTLRALRPLRALSR) traverse the membrane as a helical segment. Over 1310–1326 (FEGMRVVVNALVGAIPS) the chain is Cytoplasmic. A helical transmembrane segment spans residues 1327–1346 (IMNVLLVCLIFWLIFSIMGV). Residues 1347 to 1399 (NLFAGKYHYCFNETSEIRFEIEDVNNKTECEKLMEGNNTEIRWKNVKINFDNV) lie on the Extracellular side of the membrane. A disulfide bridge connects residues Cys-1356 and Cys-1376. N-linked (GlcNAc...) asparagine glycosylation is found at Asn-1358, Asn-1372, and Asn-1383. Residues 1400 to 1421 (GAGYLALLQVATFKGWMDIMYA) constitute an intramembrane region (pore-forming). Over 1422 to 1438 (AVDSRKPDEQPKYEDNI) the chain is Extracellular. The helical transmembrane segment at 1439–1460 (YMYIYFVIFIIFGSFFTLNLFI) threads the bilayer. At 1461–1523 (GVIIDNFNQQ…IVFDFVTQQA (63 aa)) the chain is on the cytoplasmic side. Phosphoserine; by PKC is present on Ser-1497. The IV repeat unit spans residues 1504–1801 (IPRPLNKIQG…WEKFDPDATQ (298 aa)). A helical membrane pass occupies residues 1524 to 1541 (FDIVIMMLICLNMVTMMV). Topologically, residues 1542–1552 (ETDTQSKQMEN) are extracellular. Residues 1553-1571 (ILYWINLVFVIFFTCECVL) form a helical membrane-spanning segment. The Cytoplasmic portion of the chain corresponds to 1572 to 1583 (KMFALRHYYFTI). The chain crosses the membrane as a helical span at residues 1584–1601 (GWNIFDFVVVILSIVGMF). The Extracellular portion of the chain corresponds to 1602–1614 (LADIIEKYFVSPT). Residues 1615–1631 (LFRVIRLARIGRILRLI) form a helical membrane-spanning segment. At 1632 to 1650 (KGAKGIRTLLFALMMSLPA) the chain is on the cytoplasmic side. A helical transmembrane segment spans residues 1651–1668 (LFNIGLLLFLVMFIFSIF). The Extracellular segment spans residues 1669–1690 (GMSNFAYVKHEAGIDDMFNFET). Positions 1691 to 1713 (FGNSMICLFQITTSAGWDGLLLP) form an intramembrane region, pore-forming. Topologically, residues 1714–1742 (ILNRPPDCSLDKEHPGSGFKGDCGNPSVG) are extracellular. Cys-1721 and Cys-1736 are disulfide-bonded. A helical transmembrane segment spans residues 1743–1765 (IFFFVSYIIISFLIVVNMYIAII). The Cytoplasmic segment spans residues 1766-1980 (LENFSVATEE…RQKEVRESKC (215 aa)). Residues 1895 to 1924 (EEVSAVVLQRAYRGHLARRGFICKKTTSNK) enclose the IQ domain. The interval 1922–1980 (SNKLENGGTHREKKESTPSTASLPSYDSVTKPEKEKQQRAEEGRRERAKRQKEVRESKC) is disordered. The span at 1938 to 1949 (TPSTASLPSYDS) shows a compositional bias: polar residues. Positions 1951 to 1980 (TKPEKEKQQRAEEGRRERAKRQKEVRESKC) are enriched in basic and acidic residues.

Belongs to the sodium channel (TC 1.A.1.10) family. Nav1.6/SCN8A subfamily. As to quaternary structure, the voltage-sensitive sodium channel consists of an ion-conducting pore-forming alpha subunit regulated by one or more beta-1 (SCN1B), beta-2 (SCN2B), beta-3 (SCN3B) and/or beta-4 (SCN4B) subunits. Beta-1 (SCN1B) and beta-3 (SCN3B) are non-covalently associated with alpha, while beta-2 (SCN2B) and beta-4 (SCN4B) are covalently linked by disulfide bonds. Interacts with NEDD4 and NEDD4L. Interacts with FGF13. Interacts with FGF14, GBG3, GBB2 and SCN1B. Interacts with TMEM233. Interacts with the conotoxin GVIIJ. Interacts with the spider beta/delta-theraphotoxin-Pre1a. Interacts with CALM1; the interaction modulates the inactivation rate of SCN8A. May be ubiquitinated by NEDD4L; which would promote its endocytosis. Post-translationally, phosphorylation at Ser-1497 by PKC in a highly conserved cytoplasmic loop slows inactivation of the sodium channel and reduces peak sodium currents. Expressed in the hippocampus with increased expression in epileptic tissue compared to normal adjacent tissue (at protein level). In terms of tissue distribution, expressed in non-neuronal tissues, such as monocytes/macrophages.

It localises to the cell membrane. The protein localises to the cell projection. The protein resides in the axon. Its subcellular location is the cytoplasmic vesicle. It is found in the podosome. It carries out the reaction Na(+)(in) = Na(+)(out). With respect to regulation, inhibited by tetrodotoxin and, more weakly, by its metabolite 4,9-ah-tetrodotoxin. Functionally, pore-forming subunit of a voltage-gated sodium channel complex assuming opened or closed conformations in response to the voltage difference across membranes and through which sodium ions selectively pass along their electrochemical gradient. Contributes to neuronal excitability by regulating action potential threshold and propagation. Its function is as follows. More specifically expressed in non-neuronal cells, could play a role in sodium release from intracellular compartments and participate in the control of podosomes formation and macrophages adhesion and movement. The sequence is that of Sodium channel protein type 8 subunit alpha from Homo sapiens (Human).